Reading from the N-terminus, the 437-residue chain is AA9 family lytic polysaccharide monooxygenase H (437 aa).

Residues 1–21 (MNLSLFTLALVACYSSQLAAA) form the signal peptide. His-22 contributes to the Cu(2+) binding site. Cysteines 64 and 193 form a disulfide. N-linked (GlcNAc...) asparagine glycans are attached at residues Asn-67 and Asn-79. Cu(2+) is bound at residue His-104. N-linked (GlcNAc...) asparagine glycosylation is found at Asn-120 and Asn-138. 2 residues coordinate O2: His-178 and Gln-188. Tyr-190 contacts Cu(2+). N-linked (GlcNAc...) asparagine glycans are attached at residues Asn-252 and Asn-307. The Chitin-binding type-1 domain maps to 392–437 (DGKCGDGNGQTCKGSLLGECCSQVGYCGSSESYCGVGCQGNFGVCG). Cystine bridges form between Cys-395-Cys-412, Cys-403-Cys-418, Cys-411-Cys-425, and Cys-429-Cys-436.

Belongs to the polysaccharide monooxygenase AA9 family. The cofactor is Cu(2+).

The protein localises to the secreted. The catalysed reaction is [(1-&gt;4)-beta-D-glucosyl]n+m + reduced acceptor + O2 = 4-dehydro-beta-D-glucosyl-[(1-&gt;4)-beta-D-glucosyl]n-1 + [(1-&gt;4)-beta-D-glucosyl]m + acceptor + H2O.. In terms of biological role, lytic polysaccharide monooxygenase (LPMO) that depolymerizes crystalline and amorphous polysaccharides via the oxidation of scissile alpha- or beta-(1-4)-glycosidic bonds, yielding C1 and C4 oxidation products. Catalysis by LPMOs requires the reduction of the active-site copper from Cu(II) to Cu(I) by a reducing agent and H(2)O(2) or O(2) as a cosubstrate. The sequence is that of AA9 family lytic polysaccharide monooxygenase H from Botryotinia fuckeliana (strain B05.10) (Noble rot fungus).